A 232-amino-acid chain; its full sequence is MEEVAEEVPVVYLHDVKRQYVQGESILTILNGAKLALWAGQSVALVAPSGAGKSTLLHIAGLLEHPDEGEVYVGGTATSGLSDAERTQIRRTDIGFVYQSHRLLPEFSALENVMLPQMIRGLKRSETTERAKEILAYLGLGDRITHRPAELSGGEQQRVAIARAVANAPRVLLADEPTGNLDVHTADHVFQALMQLVRATQVAMLIATHNMELAGRMDRRVSIQDGLVVELD.

The ABC transporter domain occupies 11–231; that stretch reads VYLHDVKRQY…SIQDGLVVEL (221 aa). 47 to 54 contributes to the ATP binding site; the sequence is APSGAGKS.

The protein belongs to the ABC transporter superfamily. Lipoprotein translocase (TC 3.A.1.125) family. In terms of assembly, the complex is composed of two ATP-binding proteins (LolD) and two transmembrane proteins (LolC and LolE).

It localises to the cell inner membrane. In terms of biological role, part of the ABC transporter complex LolCDE involved in the translocation of mature outer membrane-directed lipoproteins, from the inner membrane to the periplasmic chaperone, LolA. Responsible for the formation of the LolA-lipoprotein complex in an ATP-dependent manner. The sequence is that of Lipoprotein-releasing system ATP-binding protein LolD 1 from Rhodopseudomonas palustris (strain BisB18).